The chain runs to 926 residues: Alpha-L-rhamnosidase (926 aa).

The first 25 residues, 1–25, serve as a signal peptide directing secretion; the sequence is MILHKSVFKSYIYVLTYFVFFSVMS. Cys-26 carries N-palmitoyl cysteine lipidation. The S-diacylglycerol cysteine moiety is linked to residue Cys-26. Residues Asp-504, 508-510, Asp-517, and Trp-569 contribute to the alpha-L-rhamnose site; that span reads RDE. Glu-510 functions as the Proton donor in the catalytic mechanism. Glu-779 serves as the catalytic Proton acceptor. Residue His-800 coordinates alpha-L-rhamnose.

The protein belongs to the glycosyl hydrolase 78 family.

The protein localises to the cell membrane. It carries out the reaction Hydrolysis of terminal non-reducing alpha-L-rhamnose residues in alpha-L-rhamnosides.. Its function is as follows. Alpha-L-rhamnosidase involved in ulvan degradation. Ulvan is the main polysaccharide component of the Ulvales (green seaweed) cell wall. It is composed of disaccharide building blocks comprising 3-sulfated rhamnose (Rha3S) linked to D-glucuronic acid (GlcA), L-iduronic acid (IduA), or D-xylose (Xyl). Alpha-L-rhamnosidase converts Rha-Xyl-Rha3S, the product of a sulfatase acting on Rha3S-Xyl-Rha3S oligosaccharides, to Rha and Xyl-Rha3S. The enzyme is able to degrade p-nitrophenyl-alpha-L-rhamnopyranoside (PNP-Rha) in vitro. In Formosa agariphila (strain DSM 15362 / KCTC 12365 / LMG 23005 / KMM 3901 / M-2Alg 35-1), this protein is Alpha-L-rhamnosidase.